We begin with the raw amino-acid sequence, 234 residues long: Putative methyltransferase-like protein 15P1 (234 aa).

Residues Gly-100 to His-102, Asp-119, Phe-146, Asp-169, and Gln-176 each bind S-adenosyl-L-methionine.

It belongs to the methyltransferase superfamily. RsmH family.

Its function is as follows. Probable S-adenosyl-L-methionine-dependent methyltransferase. The protein is Putative methyltransferase-like protein 15P1 (METTL15P1) of Homo sapiens (Human).